A 455-amino-acid polypeptide reads, in one-letter code: UDP-N-acetylmuramoylalanine--D-glutamate ligase (455 aa).

Position 119-125 (119-125 (GTNGKTT)) interacts with ATP.

Belongs to the MurCDEF family.

Its subcellular location is the cytoplasm. The catalysed reaction is UDP-N-acetyl-alpha-D-muramoyl-L-alanine + D-glutamate + ATP = UDP-N-acetyl-alpha-D-muramoyl-L-alanyl-D-glutamate + ADP + phosphate + H(+). The protein operates within cell wall biogenesis; peptidoglycan biosynthesis. Cell wall formation. Catalyzes the addition of glutamate to the nucleotide precursor UDP-N-acetylmuramoyl-L-alanine (UMA). The protein is UDP-N-acetylmuramoylalanine--D-glutamate ligase of Listeria monocytogenes serovar 1/2a (strain ATCC BAA-679 / EGD-e).